A 166-amino-acid polypeptide reads, in one-letter code: Phospholipase A2 inhibitor clone 10 (166 aa).

The N-terminal stretch at Met-1–Gly-19 is a signal peptide. A C-type lectin domain is found at Leu-46 to Glu-161. 2 cysteine pairs are disulfide-bonded: Cys-83–Cys-160 and Cys-138–Cys-152. N-linked (GlcNAc...) asparagine glycosylation occurs at Asn-122.

Belongs to the alpha-type phospholipase A2 inhibitor family. As to quaternary structure, homotrimer; non-covalently linked. In terms of tissue distribution, expressed by the liver.

It localises to the secreted. Its function is as follows. This phospholipase A2 inhibitor binds directly phospholipase A2 in the presence or absence of calcium. This chain is Phospholipase A2 inhibitor clone 10, found in Bothrops moojeni (Lance-headed viper).